We begin with the raw amino-acid sequence, 326 residues long: Beta-ketoacyl-[acyl-carrier-protein] synthase III (326 aa).

Residues C111 and H252 contribute to the active site. Positions 253–257 (QANIR) are ACP-binding. N282 is a catalytic residue.

This sequence belongs to the thiolase-like superfamily. FabH family. In terms of assembly, homodimer.

The protein localises to the plastid. It is found in the chloroplast. It catalyses the reaction malonyl-[ACP] + acetyl-CoA + H(+) = 3-oxobutanoyl-[ACP] + CO2 + CoA. Its pathway is lipid metabolism; fatty acid biosynthesis. In terms of biological role, catalyzes the condensation reaction of fatty acid synthesis by the addition to an acyl acceptor of two carbons from malonyl-ACP. Catalyzes the first condensation reaction which initiates fatty acid synthesis and may therefore play a role in governing the total rate of fatty acid production. Possesses both acetoacetyl-ACP synthase and acetyl transacylase activities. Its substrate specificity determines the biosynthesis of branched-chain and/or straight-chain of fatty acids. The protein is Beta-ketoacyl-[acyl-carrier-protein] synthase III of Porphyra umbilicalis (Purple laver).